The chain runs to 476 residues: ATP synthase subunit beta, chloroplastic (476 aa).

Residue 156–163 (GGAGVGKT) participates in ATP binding.

This sequence belongs to the ATPase alpha/beta chains family. F-type ATPases have 2 components, CF(1) - the catalytic core - and CF(0) - the membrane proton channel. CF(1) has five subunits: alpha(3), beta(3), gamma(1), delta(1), epsilon(1). CF(0) has four main subunits: a(1), b(1), b'(1) and c(9-12).

It is found in the plastid. The protein localises to the chloroplast thylakoid membrane. It carries out the reaction ATP + H2O + 4 H(+)(in) = ADP + phosphate + 5 H(+)(out). Its function is as follows. Produces ATP from ADP in the presence of a proton gradient across the membrane. The catalytic sites are hosted primarily by the beta subunits. In Fucus vesiculosus (Bladder wrack), this protein is ATP synthase subunit beta, chloroplastic.